Reading from the N-terminus, the 128-residue chain is Probable 4-amino-4-deoxy-L-arabinose-phosphoundecaprenol flippase subunit ArnF (128 aa).

The Cytoplasmic segment spans residues 1–2; that stretch reads MG. The chain crosses the membrane as a helical span at residues 3–23; it reads LMWGLFSVIIASVAQLSLGFA. Residues 24–35 lie on the Periplasmic side of the membrane; it reads ASHLPPMTHLWD. The helical transmembrane segment at 36–56 threads the bilayer; sequence FIATLLAFGLDARILLLGLLG. Residues 57–77 are Cytoplasmic-facing; sequence YLLSVFCWYKTLHKLALSKAY. The chain crosses the membrane as a helical span at residues 78 to 98; sequence ALLSMSYVLVWIASMVLPGWG. The Periplasmic segment spans residues 99 to 100; sequence GT. The chain crosses the membrane as a helical span at residues 101–121; it reads FSLKALLGVACIMSGLMLIFL. Residues 122–128 lie on the Cytoplasmic side of the membrane; that stretch reads PTTKQRY.

The protein belongs to the ArnF family. Heterodimer of ArnE and ArnF.

It is found in the cell inner membrane. The protein operates within bacterial outer membrane biogenesis; lipopolysaccharide biosynthesis. In terms of biological role, translocates 4-amino-4-deoxy-L-arabinose-phosphoundecaprenol (alpha-L-Ara4N-phosphoundecaprenol) from the cytoplasmic to the periplasmic side of the inner membrane. The polypeptide is Probable 4-amino-4-deoxy-L-arabinose-phosphoundecaprenol flippase subunit ArnF (Shigella dysenteriae serotype 1 (strain Sd197)).